A 153-amino-acid chain; its full sequence is Prostaglandin E synthase (153 aa).

The Lumenal portion of the chain corresponds to 1-13; it reads MPPPVLALVSGQA. The helical transmembrane segment at 14–42 threads the bilayer; sequence LPAFLLCSTLLVIKMYVVAVITGQVRLRK. R39 contributes to the glutathione binding site. The Cytoplasmic portion of the chain corresponds to 43–61; that stretch reads KAFANPEDALRHGGLQYCR. The chain crosses the membrane as a helical span at residues 62 to 91; the sequence is SDQDVDRCLRAHRNDMETIYPFLFLGFVYS. 74 to 78 contributes to the glutathione binding site; that stretch reads RNDME. Residues 92–96 lie on the Lumenal side of the membrane; sequence FLGPD. Residues 97–120 form a helical membrane-spanning segment; the sequence is PFIAQMHFLVFFLGRMVHTVAYLG. Glutathione-binding residues include H114 and Y118. Residues 121 to 124 are Cytoplasmic-facing; it reads KLRA. Residues 125–153 traverse the membrane as a helical segment; it reads PTRSLAYTVAQLPCASMALQIVWEAACHL. 127 to 131 contributes to the glutathione binding site; it reads RSLAY.

The protein belongs to the MAPEG family. Homotrimer. Requires glutathione as cofactor.

It localises to the membrane. The protein resides in the cytoplasm. The protein localises to the perinuclear region. It carries out the reaction prostaglandin H2 = prostaglandin E2. The catalysed reaction is 2-glyceryl-prostaglandin H2 = 2-glyceryl-prostaglandin E2. It catalyses the reaction prostaglandin G2 = (15S)-15-hydroperoxy-prostaglandin E2. The enzyme catalyses 1-chloro-2,4-dinitrobenzene + glutathione = 2,4-dinitrophenyl-S-glutathione + chloride + H(+). It carries out the reaction (5S)-hydroperoxy-(6E,8Z,11Z,14Z)-eicosatetraenoate + 2 glutathione = (5S)-hydroxy-(6E,8Z,11Z,14Z)-eicosatetraenoate + glutathione disulfide + H2O. It participates in lipid metabolism; prostaglandin biosynthesis. Functionally, terminal enzyme of the cyclooxygenase (COX)-2-mediated prostaglandin E2 (PGE2) biosynthetic pathway. Catalyzes the glutathione-dependent oxidoreduction of prostaglandin endoperoxide H2 (PGH2) to prostaglandin E2 (PGE2) in response to inflammatory stimuli. Plays a key role in inflammation response, fever and pain. Also catalyzes the oxidoreduction of endocannabinoids into prostaglandin glycerol esters and PGG2 into 15-hydroperoxy-PGE2. In addition, displays low glutathione transferase and glutathione-dependent peroxidase activities, toward 1-chloro-2,4-dinitrobenzene and 5-hydroperoxyicosatetraenoic acid (5-HPETE), respectively. The sequence is that of Prostaglandin E synthase (PTGES) from Canis lupus familiaris (Dog).